Here is a 384-residue protein sequence, read N- to C-terminus: S-adenosylmethionine synthase (384 aa).

Residue His-15 coordinates ATP. Asp-17 lines the Mg(2+) pocket. Position 43 (Glu-43) interacts with K(+). Positions 56 and 99 each coordinate L-methionine. The tract at residues 99–109 (QSPDINQGVDR) is flexible loop. Residues 164 to 166 (DAK), 230 to 231 (RF), Asp-239, 245 to 246 (RK), Ala-262, and Lys-266 each bind ATP. Residue Asp-239 coordinates L-methionine. Position 270 (Lys-270) interacts with L-methionine.

This sequence belongs to the AdoMet synthase family. Homotetramer; dimer of dimers. Mg(2+) is required as a cofactor. It depends on K(+) as a cofactor.

The protein resides in the cytoplasm. It carries out the reaction L-methionine + ATP + H2O = S-adenosyl-L-methionine + phosphate + diphosphate. The protein operates within amino-acid biosynthesis; S-adenosyl-L-methionine biosynthesis; S-adenosyl-L-methionine from L-methionine: step 1/1. Functionally, catalyzes the formation of S-adenosylmethionine (AdoMet) from methionine and ATP. The overall synthetic reaction is composed of two sequential steps, AdoMet formation and the subsequent tripolyphosphate hydrolysis which occurs prior to release of AdoMet from the enzyme. The sequence is that of S-adenosylmethionine synthase from Yersinia pseudotuberculosis serotype IB (strain PB1/+).